The sequence spans 1095 residues: MSSKETIPMHQRSQNVAELLTVLMDINKINGGDSTTAEKMKVHAKSFEAALFEKSSSKEEYQKTMKSKIDAMRSTRDKRKRESVGSASMMANLGQDGTNNNNNNNNNNNNNLNMAASFMGGDMFGRNQSPAQNSNANTNLNTNVGPGVNGPNGNDGTANPQMFMNQQAQARQQAAARQLKNRQMGGSSAQQQQLTQQQQQLLNQMRVAPIPKELLQRIPNLPPGVTTWEQVTALAQQNRLSAQDMSIAKDIYKIHQQYLIKAKLQQQQQRQQQQRQQGNPDVNNNMAGSNNNNNNNLPMAQQQMQQRQQQQQQSQQQQNRNPNQRHNVLSQINQMFTADEQRALLQEAMEACKNFQKTHFGGQMSDANKQAFIKKFINSKALKKLEAMRMAQGGNNNANLNKGQADMLQRQQANMQMNQQQQRAAQNQRRGPVMNDAVSQGYNNQMNSAADSTMNNSNQPMNIGNNGVNMIPNQSQQQQQTNRPKEQTPQQPQQRIQSNRSVPMLNPTPEDVEVVRRISAEAAKTQLRLTDLTNSLTPQERDEIKKRLQKNQQLFAQVSSYAPQVYLFTKSESFLKEVLQLRIFIKEILEKCSKGIYVVKLDTVDKLVIKYQKYWESMKIQLLRRQQLLQQQQQQQQQGMDPNRAQNSQQQQQQNQANMQQARNRKPTKNQTTPAIAASVAMNMNDKGASMSPALQKAGSAVPNFAQQMSPNMTPGTIPPTNVLSPHSQSHIPMVSPTMAKAASAAALKNDTASSSRRGSTKPRGKSTAPVTGKKTSNAPTPQVVPATVPSTTNLSAAGTPNIRNKSATPLTAGLSPKSTIRSNSNTALASAKTPSPMTVSIPQPGNSSVFKKEEEYLSKLQLRKEEIRFRQKQRLDILSSSPVDLFLTTVADCLGINDEEIELINKIPETTADNINNTGKKKLTKAAQKLRDKEILNVSIQVGEKDKLIMSSKAPDKVMDYSISAMSLAAVFKNLSSTGSLNNIALSGSNATTSKDIGNIYSHTGGVKRKFDEVEISPNSNGSPSASIMSESKKIKIDSPEDMFVTHSSEAAKGTNNSSLMDSGKEGSCKSMAGSATEVNDTSIWDWNFWTSIE.

Residues 66 to 83 show a composition bias toward basic and acidic residues; the sequence is KSKIDAMRSTRDKRKRES. 6 disordered regions span residues 66 to 197, 265 to 323, 448 to 508, 633 to 672, 737 to 847, and 1050 to 1075; these read KSKI…LTQQ, QQQQ…RNPN, SAAD…LNPT, QQQQ…KNQT, PTMA…QPGN, and SEAA…SMAG. Composition is skewed to low complexity over residues 99–113 and 133–154; these read NNNN…NNLN and NSNA…PNGN. Residues 155–165 show a composition bias toward polar residues; that stretch reads DGTANPQMFMN. Residues 166–178 are compositionally biased toward low complexity; sequence QQAQARQQAAARQ. Residues 448–473 show a composition bias toward polar residues; that stretch reads SAADSTMNNSNQPMNIGNNGVNMIPN. Composition is skewed to low complexity over residues 487–500, 633–662, and 780–793; these read QTPQ…QSNR, QQQQ…MQQA, and PTPQ…PSTT. Polar residues-rich tracts occupy residues 794-810, 817-847, and 1050-1062; these read NLSA…SATP, PKST…QPGN, and SEAA…SSLM.

This sequence belongs to the Mediator complex subunit 15 family. Component of the Mediator complex.

The protein localises to the nucleus. Its function is as follows. Component of the Mediator complex, a coactivator involved in regulated gene transcription of nearly all RNA polymerase II-dependent genes. Mediator functions as a bridge to convey information from gene-specific regulatory proteins to the basal RNA polymerase II transcription machinery. Mediator is recruited to promoters by direct interactions with regulatory proteins and serves as a scaffold for the assembly of a functional preinitiation complex with RNA polymerase II and the general transcription factors. This chain is Mediator of RNA polymerase II transcription subunit 15 (GAL11), found in Candida glabrata (strain ATCC 2001 / BCRC 20586 / JCM 3761 / NBRC 0622 / NRRL Y-65 / CBS 138) (Yeast).